An 89-amino-acid polypeptide reads, in one-letter code: Cell division topological specificity factor (89 aa).

Belongs to the MinE family.

Prevents the cell division inhibition by proteins MinC and MinD at internal division sites while permitting inhibition at polar sites. This ensures cell division at the proper site by restricting the formation of a division septum at the midpoint of the long axis of the cell. The polypeptide is Cell division topological specificity factor (Paracoccus denitrificans (strain Pd 1222)).